The sequence spans 893 residues: Valine--tRNA ligase (893 aa).

A 'HIGH' region motif is present at residues 57 to 67; that stretch reads PNVTGTLHMGH. Residues 545-549 carry the 'KMSKS' region motif; the sequence is KMSKS. ATP is bound at residue Lys548. Positions 821–855 form a coiled coil; the sequence is TSGSVDLEAERKRLEKDLAAAQKELATTEGKLGNE.

This sequence belongs to the class-I aminoacyl-tRNA synthetase family. ValS type 1 subfamily. Monomer.

It is found in the cytoplasm. It carries out the reaction tRNA(Val) + L-valine + ATP = L-valyl-tRNA(Val) + AMP + diphosphate. Its function is as follows. Catalyzes the attachment of valine to tRNA(Val). As ValRS can inadvertently accommodate and process structurally similar amino acids such as threonine, to avoid such errors, it has a 'posttransfer' editing activity that hydrolyzes mischarged Thr-tRNA(Val) in a tRNA-dependent manner. The chain is Valine--tRNA ligase from Nocardia farcinica (strain IFM 10152).